The sequence spans 650 residues: tRNA-dihydrouridine(47) synthase [NAD(P)(+)]-like (650 aa).

2 disordered regions span residues 1 to 24 (MAEG…GALE) and 46 to 120 (EAKG…NYDK). Ala-2 is modified (N-acetylalanine). 2 stretches are compositionally biased toward basic and acidic residues: residues 48-58 (KGQEKTCRETE) and 70-79 (PEAKRIRLED). Over residues 101-113 (KRARGQNKGRPHV) the composition is skewed to basic residues. C3H1-type zinc fingers lie at residues 118 to 148 (YDKN…HDVG) and 156 to 186 (ADLG…HLRP). Residues 235 to 284 (FSQGPTPAAAVPEGTAAEGAPRQENCGAQQVPAGPGTSTPPSSPVRTCGP) form a disordered region. Ser-236 is modified (phosphoserine). The residue at position 273 (Thr-273) is a Phosphothreonine. 2 positions are modified to phosphoserine: Ser-276 and Ser-277. Residues 311–313 (PLT) and Gln-365 each bind FMN. Cys-396 acts as the Proton donor in catalysis. Lys-416 is covalently cross-linked (Glycyl lysine isopeptide (Lys-Gly) (interchain with G-Cter in SUMO2)). Residues Lys-435, His-465, 497–499 (NGD), and 520–521 (AR) each bind FMN.

Belongs to the Dus family. Dus3 subfamily. FMN serves as cofactor.

It catalyses the reaction 5,6-dihydrouridine(47) in tRNA + NAD(+) = uridine(47) in tRNA + NADH + H(+). The catalysed reaction is 5,6-dihydrouridine(47) in tRNA + NADP(+) = uridine(47) in tRNA + NADPH + H(+). The enzyme catalyses a 5,6-dihydrouridine in mRNA + NAD(+) = a uridine in mRNA + NADH + H(+). It carries out the reaction a 5,6-dihydrouridine in mRNA + NADP(+) = a uridine in mRNA + NADPH + H(+). In terms of biological role, catalyzes the synthesis of dihydrouridine, a modified base, in various RNAs, such as tRNAs, mRNAs and some long non-coding RNAs (lncRNAs). Mainly modifies the uridine in position 47 (U47) in the D-loop of most cytoplasmic tRNAs. Also able to mediate the formation of dihydrouridine in some mRNAs, thereby regulating their translation. This chain is tRNA-dihydrouridine(47) synthase [NAD(P)(+)]-like, found in Homo sapiens (Human).